The sequence spans 672 residues: tRNA 5-methylaminomethyl-2-thiouridine biosynthesis bifunctional protein MnmC (672 aa).

The interval 1 to 243 is tRNA (mnm(5)s(2)U34)-methyltransferase; that stretch reads MTSIKNAELG…KREMIAGSME (243 aa). Positions 269 to 672 are FAD-dependent cmnm(5)s(2)U34 oxidoreductase; the sequence is IGGGIASAAL…LRKGKAITEL (404 aa).

The protein in the N-terminal section; belongs to the methyltransferase superfamily. tRNA (mnm(5)s(2)U34)-methyltransferase family. This sequence in the C-terminal section; belongs to the DAO family. The cofactor is FAD.

The protein localises to the cytoplasm. It catalyses the reaction 5-aminomethyl-2-thiouridine(34) in tRNA + S-adenosyl-L-methionine = 5-methylaminomethyl-2-thiouridine(34) in tRNA + S-adenosyl-L-homocysteine + H(+). Functionally, catalyzes the last two steps in the biosynthesis of 5-methylaminomethyl-2-thiouridine (mnm(5)s(2)U) at the wobble position (U34) in tRNA. Catalyzes the FAD-dependent demodification of cmnm(5)s(2)U34 to nm(5)s(2)U34, followed by the transfer of a methyl group from S-adenosyl-L-methionine to nm(5)s(2)U34, to form mnm(5)s(2)U34. The protein is tRNA 5-methylaminomethyl-2-thiouridine biosynthesis bifunctional protein MnmC of Vibrio campbellii (strain ATCC BAA-1116).